A 673-amino-acid polypeptide reads, in one-letter code: UvrABC system protein B (673 aa).

The Helicase ATP-binding domain occupies 29–188 (EGLNDGLAHQ…LAELQYTRND (160 aa)). 42 to 49 (GVTGSGKT) is a binding site for ATP. The short motif at 95–118 (YYDYYQPEAYVPSSDTFIEKDASI) is the Beta-hairpin element. A Helicase C-terminal domain is found at 434 to 600 (QVDDVLSEIH…ALNKKVGELL (167 aa)). Residues 607-632 (KPKRGKQAVKVEEKSANTYKPKSRKE) are disordered. Residues 634–669 (EKELKQLEQQMRDFAKDLEFEKAAAVRDKIGQLKAV) enclose the UVR domain.

This sequence belongs to the UvrB family. Forms a heterotetramer with UvrA during the search for lesions. Interacts with UvrC in an incision complex.

It is found in the cytoplasm. Functionally, the UvrABC repair system catalyzes the recognition and processing of DNA lesions. A damage recognition complex composed of 2 UvrA and 2 UvrB subunits scans DNA for abnormalities. Upon binding of the UvrA(2)B(2) complex to a putative damaged site, the DNA wraps around one UvrB monomer. DNA wrap is dependent on ATP binding by UvrB and probably causes local melting of the DNA helix, facilitating insertion of UvrB beta-hairpin between the DNA strands. Then UvrB probes one DNA strand for the presence of a lesion. If a lesion is found the UvrA subunits dissociate and the UvrB-DNA preincision complex is formed. This complex is subsequently bound by UvrC and the second UvrB is released. If no lesion is found, the DNA wraps around the other UvrB subunit that will check the other stand for damage. This chain is UvrABC system protein B, found in Actinobacillus pleuropneumoniae serotype 5b (strain L20).